The sequence spans 531 residues: Zinc finger protein 692 (531 aa).

Residues 155-178 (EAQGLECEQRERTQETRLSRRVDS) are compositionally biased toward basic and acidic residues. Disordered stretches follow at residues 155–249 (EAQG…PATL) and 287–307 (MTES…PTWD). Residues 186-206 (LGEDQDVEEEEEEEEEEEELL) show a composition bias toward acidic residues. Ser-231 is subject to Phosphoserine. A compositionally biased stretch (polar residues) spans 290 to 303 (SLESPGSQAQSAPN). C2H2-type zinc fingers lie at residues 327-352 (MPCD…KYQH), 358-382 (FCCP…VKLH), 388-410 (YICE…RRIH), 416-438 (LQCE…RRKH), and 447-470 (FPCE…SKSH). Ser-469 carries the post-translational modification Phosphoserine. Positions 474 to 531 (LPAQEPPGSLVSSPSISAPESLQSPEGASISTTSDSNPASSTSISSPGVPDPRNREKS) are disordered. Polar residues predominate over residues 483–499 (LVSSPSISAPESLQSPE). Residues 502-520 (SISTTSDSNPASSTSISSP) are compositionally biased toward low complexity.

The protein belongs to the krueppel C2H2-type zinc-finger protein family. Post-translationally, phosphorylation at Ser-469 results in loss of DNA-binding activity.

The protein localises to the nucleus. Functionally, may act as an transcriptional repressor for PCK1 gene expression, in turn may participate in the hepatic gluconeogenesis regulation through the activated AMPK signaling pathway. This chain is Zinc finger protein 692, found in Mus musculus (Mouse).